Here is a 252-residue protein sequence, read N- to C-terminus: Thiamine thiazole synthase (252 aa).

Residues S35, 54–55, G62, V126, and 152–154 each bind NAD(+); these read EK and HVD. Positions 154 and 169 each coordinate Fe cation. M217 is a binding site for NAD(+). R227 serves as a coordination point for glycine.

The protein belongs to the THI4 family. In terms of assembly, homooctamer; tetramer of dimers. It depends on Fe(2+) as a cofactor.

The catalysed reaction is hydrogen sulfide + glycine + NAD(+) = ADP-5-ethyl-4-methylthiazole-2-carboxylate + nicotinamide + 3 H2O + H(+). It participates in cofactor biosynthesis; thiamine diphosphate biosynthesis. In terms of biological role, involved in the biosynthesis of the thiazole moiety of thiamine. Catalyzes the conversion of NAD and glycine to adenosine diphosphate 5-(2-hydroxyethyl)-4-methylthiazole-2-carboxylate (ADT), an adenylated thiazole intermediate, using free sulfide as a source of sulfur. This Pyrococcus abyssi (strain GE5 / Orsay) protein is Thiamine thiazole synthase.